Here is a 432-residue protein sequence, read N- to C-terminus: Glutamyl-tRNA reductase (432 aa).

Residues threonine 49 to arginine 52, serine 107, glutamate 112 to glutamine 114, and glutamine 118 each bind substrate. Residue cysteine 50 is the Nucleophile of the active site. NADP(+) is bound at residue glycine 186–glycine 191.

Belongs to the glutamyl-tRNA reductase family. In terms of assembly, homodimer.

It carries out the reaction (S)-4-amino-5-oxopentanoate + tRNA(Glu) + NADP(+) = L-glutamyl-tRNA(Glu) + NADPH + H(+). The protein operates within porphyrin-containing compound metabolism; protoporphyrin-IX biosynthesis; 5-aminolevulinate from L-glutamyl-tRNA(Glu): step 1/2. Functionally, catalyzes the NADPH-dependent reduction of glutamyl-tRNA(Glu) to glutamate 1-semialdehyde (GSA). The protein is Glutamyl-tRNA reductase of Campylobacter jejuni subsp. jejuni serotype O:23/36 (strain 81-176).